Reading from the N-terminus, the 173-residue chain is 6,7-dimethyl-8-ribityllumazine synthase (173 aa).

5-amino-6-(D-ribitylamino)uracil contacts are provided by residues phenylalanine 24, 58–60, and 82–84; these read ALE and AVI. Residue 87 to 88 coordinates (2S)-2-hydroxy-3-oxobutyl phosphate; it reads ET. Histidine 90 functions as the Proton donor in the catalytic mechanism. Position 115 (asparagine 115) interacts with 5-amino-6-(D-ribitylamino)uracil. Arginine 129 lines the (2S)-2-hydroxy-3-oxobutyl phosphate pocket. The tract at residues 150–173 is disordered; the sequence is ALEPEEDDEDDEDEDFDDEEDDGR. Residues 152–173 show a composition bias toward acidic residues; it reads EPEEDDEDDEDEDFDDEEDDGR.

Belongs to the DMRL synthase family.

The enzyme catalyses (2S)-2-hydroxy-3-oxobutyl phosphate + 5-amino-6-(D-ribitylamino)uracil = 6,7-dimethyl-8-(1-D-ribityl)lumazine + phosphate + 2 H2O + H(+). The protein operates within cofactor biosynthesis; riboflavin biosynthesis; riboflavin from 2-hydroxy-3-oxobutyl phosphate and 5-amino-6-(D-ribitylamino)uracil: step 1/2. Its function is as follows. Catalyzes the formation of 6,7-dimethyl-8-ribityllumazine by condensation of 5-amino-6-(D-ribitylamino)uracil with 3,4-dihydroxy-2-butanone 4-phosphate. This is the penultimate step in the biosynthesis of riboflavin. The protein is 6,7-dimethyl-8-ribityllumazine synthase of Bordetella pertussis (strain Tohama I / ATCC BAA-589 / NCTC 13251).